The primary structure comprises 606 residues: Elongation factor 4 (606 aa).

A tr-type G domain is found at 7–189; the sequence is SRIRNFCIIA…AVVDRVPPPK (183 aa). GTP contacts are provided by residues 19 to 24 and 136 to 139; these read DHGKST and NKID.

Belongs to the TRAFAC class translation factor GTPase superfamily. Classic translation factor GTPase family. LepA subfamily.

It is found in the cell inner membrane. The enzyme catalyses GTP + H2O = GDP + phosphate + H(+). Its function is as follows. Required for accurate and efficient protein synthesis under certain stress conditions. May act as a fidelity factor of the translation reaction, by catalyzing a one-codon backward translocation of tRNAs on improperly translocated ribosomes. Back-translocation proceeds from a post-translocation (POST) complex to a pre-translocation (PRE) complex, thus giving elongation factor G a second chance to translocate the tRNAs correctly. Binds to ribosomes in a GTP-dependent manner. The protein is Elongation factor 4 of Synechococcus sp. (strain CC9605).